The following is a 356-amino-acid chain: MGSCQSNENSEGNARNKEIEKQLNADKRAGSSIVKLLLLGAGECGKSTVLKQMQILHSNGFTEEEVNEKRAIVYNNTVSAMCTILRAMDGVLHLPLENGQKEAEKAIVMKVQENGEEGEALTEEVSKAIQSLWADPGVKKAFEMRSEYQLPDSAKYFLDNCQRISEPGYRPNDQDILYSRVATTGVVEVKFKIKELDFRVFDVGGQRSERRKWIHCFDNVESIIFITAISEYDQVLFEDETTNRMIESMQLFNSICNSTWFLSTAMILFMNKKDLFMEKIQRVNITTAFPDYEGGQNYEEAVSFIKQKFAELNLNPDKKTIYMHETCATDTNQVQLVISSVIDTIIQKNLQKAGMM.

Gly2 carries N-myristoyl glycine lipidation. Cys4 carries the S-palmitoyl cysteine lipid modification. The 325-residue stretch at 32–356 folds into the G-alpha domain; that stretch reads SIVKLLLLGA…QKNLQKAGMM (325 aa). The tract at residues 35–48 is G1 motif; sequence KLLLLGAGECGKST. GTP is bound by residues 40–47, 177–183, 202–206, 271–274, and Ala328; these read GAGECGKS, LYSRVAT, DVGGQ, and NKKD. Mg(2+) contacts are provided by Ser47 and Thr183. Positions 175-183 are G2 motif; the sequence is DILYSRVAT. A G3 motif region spans residues 198–207; that stretch reads FRVFDVGGQR. The tract at residues 267–274 is G4 motif; sequence ILFMNKKD. A G5 motif region spans residues 326–331; the sequence is TCATDT.

It belongs to the G-alpha family. In terms of assembly, g proteins are composed of 3 units; alpha, beta and gamma. The alpha chain contains the guanine nucleotide binding site. As to expression, expressed in sensory neurons in the head and tail. Expressed in amphid AWC neurons, to a lesser extent in AWB and weakly in AWA, ASH and ADF neurons (head sensory neurons). Expressed in phasmid PHA and PHB neurons (tail sensory neurons).

The protein localises to the cell projection. It localises to the cilium. The protein resides in the dendrite. In terms of biological role, guanine nucleotide-binding proteins (G proteins) are involved as modulators or transducers in various transmembrane signaling systems. This specific G-alpha subunit plays an important role in olfaction and in cilia morphogenesis. Involved in chemotactic responses to attractants diacetyl, pyrazine, 2,4,5-trimethylthiazole, benzaldehyde, isoamyl alcohol, butanone and 2,3-pentanedione. Displays a redundant function with gpa-3 in chemotactic responses. Plays a role in the avoidance response to the noxious chemical quinine in ASH sensory neurons. Involved in avoidance responses to copper, sodium dodecyl sulfate and linoleic acid. Involved in osmotic avoidance and mechanosensory responses. Involved in specifying fan-like morphology of cilia of head sensory neurons AWC. Plays a role in the detection of preferred food sources by mediating the recognition of food odors in olfactory sensory neurons. In Caenorhabditis elegans, this protein is Guanine nucleotide-binding protein alpha-17 subunit.